The primary structure comprises 495 residues: Glycerol kinase (495 aa).

An ADP-binding site is contributed by T11. ATP is bound by residues T11, T12, and S13. T11 serves as a coordination point for sn-glycerol 3-phosphate. R15 serves as a coordination point for ADP. 4 residues coordinate sn-glycerol 3-phosphate: R81, E82, Y133, and D242. R81, E82, Y133, D242, and Q243 together coordinate glycerol. The ADP site is built by T264 and G307. Positions 264, 307, 311, and 408 each coordinate ATP. The ADP site is built by G408 and N412.

It belongs to the FGGY kinase family.

It catalyses the reaction glycerol + ATP = sn-glycerol 3-phosphate + ADP + H(+). It functions in the pathway polyol metabolism; glycerol degradation via glycerol kinase pathway; sn-glycerol 3-phosphate from glycerol: step 1/1. Its activity is regulated as follows. Inhibited by fructose 1,6-bisphosphate (FBP). Functionally, key enzyme in the regulation of glycerol uptake and metabolism. Catalyzes the phosphorylation of glycerol to yield sn-glycerol 3-phosphate. The polypeptide is Glycerol kinase (Citrifermentans bemidjiense (strain ATCC BAA-1014 / DSM 16622 / JCM 12645 / Bem) (Geobacter bemidjiensis)).